The sequence spans 204 residues: Somatotropin (204 aa).

The first 17 residues, methionine 1–serine 17, serve as a signal peptide directing secretion. At glutamine 18 the chain carries Pyrrolidone carboxylic acid. A Zn(2+)-binding site is contributed by histidine 36. A disulfide bridge links cysteine 69 with cysteine 177. Glutamate 186 contributes to the Zn(2+) binding site. A disulfide bridge links cysteine 194 with cysteine 202.

It belongs to the somatotropin/prolactin family.

It localises to the secreted. In terms of biological role, growth hormone plays an important role in growth control and is involved in the regulation of several anabolic processes. Implicated as an osmoregulatory substance important for seawater adaptation. The protein is Somatotropin (gh) of Sciaenops ocellatus (Red drum).